Here is a 234-residue protein sequence, read N- to C-terminus: Segregation and condensation protein A (234 aa).

The protein belongs to the ScpA family. Component of a cohesin-like complex composed of ScpA, ScpB and the Smc homodimer, in which ScpA and ScpB bind to the head domain of Smc. The presence of the three proteins is required for the association of the complex with DNA.

It is found in the cytoplasm. Functionally, participates in chromosomal partition during cell division. May act via the formation of a condensin-like complex containing Smc and ScpB that pull DNA away from mid-cell into both cell halves. The sequence is that of Segregation and condensation protein A from Streptococcus pyogenes serotype M3 (strain ATCC BAA-595 / MGAS315).